The chain runs to 382 residues: Proton extrusion protein PxcA (382 aa).

The next 4 membrane-spanning stretches (helical) occupy residues 156-176 (TLIS…VQQI), 257-277 (AIKN…VCII), 305-325 (IILF…QVLL), and 340-360 (FILL…KYWI).

Belongs to the CemA family.

The protein localises to the cell inner membrane. In terms of biological role, required for H(+) efflux immediately after light irradiation to form a rapid H(+) concentration gradient across the thylakoid membranes. Together with PxcL, contributes to transient H(+) uptake following dark to light transition. The polypeptide is Proton extrusion protein PxcA (Prochlorococcus marinus (strain MIT 9313)).